A 207-amino-acid polypeptide reads, in one-letter code: Varv peptide A/Kalata-B1 (207 aa).

The first 20 residues, 1–20 (MKMFIVLVLSAAFALPAAFA), serve as a signal peptide directing secretion. Positions 21 to 66 (TEQDVITLQAYEELLKNGAANGMTKTVISSPVLEEALVSYSKNKLG) are excised as a propeptide. Residues 67-95 (GLPVCGETCVGGTCNTPGCSCSWPVCTRN) constitute a cross-link (cyclopeptide (Gly-Asn)). Disulfide bonds link Cys71–Cys85, Cys75–Cys87, and Cys80–Cys92. Positions 96–120 (SLESTKSANPLLEEALTAFAKKGLG) are excised as a propeptide. A cross-link (cyclopeptide (Gly-Asn)) is located at residues 121-149 (GLPVCGETCVGGTCNTPGCTCSWPVCTRN). 3 cysteine pairs are disulfide-bonded: Cys125/Cys139, Cys129/Cys141, and Cys134/Cys146. The propeptide occupies 150 to 174 (ALETQKPNHLLEEALVAFAKKGNLG). Residues 175 to 203 (GLPVCGETCVGGTCNTPGCSCSWPVCTRN) constitute a cross-link (cyclopeptide (Gly-Asn)). Intrachain disulfides connect Cys179–Cys193, Cys183–Cys195, and Cys188–Cys200. Residues 204 to 207 (ALAM) constitute a propeptide that is removed on maturation.

The protein belongs to the cyclotide family. Moebius subfamily. Varv peptide A and kalata-B1 are cyclic peptides.

Functionally, probably participates in a plant defense mechanism. Has hemolytic activity. This Viola odorata (Sweet violet) protein is Varv peptide A/Kalata-B1.